Reading from the N-terminus, the 338-residue chain is Anthranilate phosphoribosyltransferase (338 aa).

5-phospho-alpha-D-ribose 1-diphosphate contacts are provided by residues glycine 81, 84–85 (GD), threonine 89, 91–94 (NIST), 109–117 (KHGNRALSS), and alanine 121. Position 81 (glycine 81) interacts with anthranilate. Mg(2+) is bound at residue serine 93. Asparagine 112 is an anthranilate binding site. Arginine 167 contributes to the anthranilate binding site. Mg(2+) is bound by residues aspartate 225 and glutamate 226.

This sequence belongs to the anthranilate phosphoribosyltransferase family. In terms of assembly, homodimer. It depends on Mg(2+) as a cofactor.

The catalysed reaction is N-(5-phospho-beta-D-ribosyl)anthranilate + diphosphate = 5-phospho-alpha-D-ribose 1-diphosphate + anthranilate. The protein operates within amino-acid biosynthesis; L-tryptophan biosynthesis; L-tryptophan from chorismate: step 2/5. Its function is as follows. Catalyzes the transfer of the phosphoribosyl group of 5-phosphorylribose-1-pyrophosphate (PRPP) to anthranilate to yield N-(5'-phosphoribosyl)-anthranilate (PRA). In Rhizobium etli (strain CIAT 652), this protein is Anthranilate phosphoribosyltransferase.